The primary structure comprises 119 residues: Large ribosomal subunit protein uL22 (119 aa).

It belongs to the universal ribosomal protein uL22 family. In terms of assembly, part of the 50S ribosomal subunit.

Its function is as follows. This protein binds specifically to 23S rRNA; its binding is stimulated by other ribosomal proteins, e.g. L4, L17, and L20. It is important during the early stages of 50S assembly. It makes multiple contacts with different domains of the 23S rRNA in the assembled 50S subunit and ribosome. In terms of biological role, the globular domain of the protein is located near the polypeptide exit tunnel on the outside of the subunit, while an extended beta-hairpin is found that lines the wall of the exit tunnel in the center of the 70S ribosome. This chain is Large ribosomal subunit protein uL22, found in Rickettsia felis (strain ATCC VR-1525 / URRWXCal2) (Rickettsia azadi).